The primary structure comprises 424 residues: Trigger factor (424 aa).

Residues 163–248 (GDTVVLDFEG…IHEIKAKELP (86 aa)) form the PPIase FKBP-type domain.

This sequence belongs to the FKBP-type PPIase family. Tig subfamily.

Its subcellular location is the cytoplasm. It carries out the reaction [protein]-peptidylproline (omega=180) = [protein]-peptidylproline (omega=0). Involved in protein export. Acts as a chaperone by maintaining the newly synthesized protein in an open conformation. Functions as a peptidyl-prolyl cis-trans isomerase. This Bacillus licheniformis (strain ATCC 14580 / DSM 13 / JCM 2505 / CCUG 7422 / NBRC 12200 / NCIMB 9375 / NCTC 10341 / NRRL NRS-1264 / Gibson 46) protein is Trigger factor.